A 245-amino-acid chain; its full sequence is 1-(5-phosphoribosyl)-5-[(5-phosphoribosylamino)methylideneamino] imidazole-4-carboxamide isomerase (245 aa).

Catalysis depends on aspartate 7, which acts as the Proton acceptor. The Proton donor role is filled by aspartate 129.

Belongs to the HisA/HisF family.

Its subcellular location is the cytoplasm. The catalysed reaction is 1-(5-phospho-beta-D-ribosyl)-5-[(5-phospho-beta-D-ribosylamino)methylideneamino]imidazole-4-carboxamide = 5-[(5-phospho-1-deoxy-D-ribulos-1-ylimino)methylamino]-1-(5-phospho-beta-D-ribosyl)imidazole-4-carboxamide. It functions in the pathway amino-acid biosynthesis; L-histidine biosynthesis; L-histidine from 5-phospho-alpha-D-ribose 1-diphosphate: step 4/9. This chain is 1-(5-phosphoribosyl)-5-[(5-phosphoribosylamino)methylideneamino] imidazole-4-carboxamide isomerase, found in Shewanella baltica (strain OS223).